The sequence spans 482 residues: GDP-D-glucose phosphorylase 1 (482 aa).

Positions 1–21 (MEPFPRILDDRLPRNMRRPRP) are disordered. The Tele-GMP-histidine intermediate role is filled by His-255. The tract at residues 461-482 (MPRSPSIRHRSSTRAQSDEGSK) is disordered.

This sequence belongs to the GDPGP1 family. In terms of tissue distribution, expressed throughout the neuronal system, in the spermatheca and anterior hypodermal cells.

The protein resides in the cytoplasm. It carries out the reaction GDP-alpha-D-glucose + phosphate = alpha-D-glucose 1-phosphate + GDP + H(+). Specific and highly efficient GDP-D-glucose phosphorylase regulating the levels of GDP-D-glucose in cells. This chain is GDP-D-glucose phosphorylase 1, found in Caenorhabditis elegans.